The primary structure comprises 432 residues: Methylenetetrahydrofolate--tRNA-(uracil-5-)-methyltransferase TrmFO (432 aa).

Residue 7–12 (GGGLAG) participates in FAD binding.

Belongs to the MnmG family. TrmFO subfamily. Requires FAD as cofactor.

The protein localises to the cytoplasm. It carries out the reaction uridine(54) in tRNA + (6R)-5,10-methylene-5,6,7,8-tetrahydrofolate + NADH + H(+) = 5-methyluridine(54) in tRNA + (6S)-5,6,7,8-tetrahydrofolate + NAD(+). It catalyses the reaction uridine(54) in tRNA + (6R)-5,10-methylene-5,6,7,8-tetrahydrofolate + NADPH + H(+) = 5-methyluridine(54) in tRNA + (6S)-5,6,7,8-tetrahydrofolate + NADP(+). Its function is as follows. Catalyzes the folate-dependent formation of 5-methyl-uridine at position 54 (M-5-U54) in all tRNAs. The sequence is that of Methylenetetrahydrofolate--tRNA-(uracil-5-)-methyltransferase TrmFO from Coprothermobacter proteolyticus (strain ATCC 35245 / DSM 5265 / OCM 4 / BT).